The primary structure comprises 513 residues: E3 ubiquitin-protein ligase RNF25 (513 aa).

Residues 9-117 (SEIEVLQSIY…ERAKEILTDS (109 aa)) form the RWD domain. Zn(2+) contacts are provided by C124, C127, C142, H144, H147, C150, C187, and C190. The segment at 124–191 (CVICLYDFKE…ELAVVCPVCR (68 aa)) adopts an RING-type; atypical zinc-finger fold. The tract at residues 261–513 (NLSDTPGMTD…EKEFRKEGVL (253 aa)) is disordered. The segment covering 271–297 (SSGAESSQSLPSSSPDSTSTTQTSQNQ) has biased composition (low complexity). 2 stretches are compositionally biased toward polar residues: residues 345 to 397 (SDKI…QDML) and 406 to 423 (EVSQ…QTIL). Over residues 426-440 (GHPEREHVGRGDKRG) the composition is skewed to basic and acidic residues. Gly residues predominate over residues 482–498 (AGRGHRGGGAYRGGGRG). Over residues 501-513 (QRVEKEFRKEGVL) the composition is skewed to basic and acidic residues.

Belongs to the RNF25 family.

It localises to the cytoplasm. It catalyses the reaction S-ubiquitinyl-[E2 ubiquitin-conjugating enzyme]-L-cysteine + [acceptor protein]-L-lysine = [E2 ubiquitin-conjugating enzyme]-L-cysteine + N(6)-ubiquitinyl-[acceptor protein]-L-lysine.. It functions in the pathway protein modification; protein ubiquitination. Functionally, E3 ubiquitin-protein ligase that plays a key role in the RNF14-RNF25 translation quality control pathway, a pathway that takes place when a ribosome has stalled during translation, and which promotes ubiquitination and degradation of translation factors on stalled ribosomes. May also acts as a positive regulator of the Wnt signaling. The protein is E3 ubiquitin-protein ligase RNF25 of Danio rerio (Zebrafish).